The following is a 280-amino-acid chain: Energy-coupling factor transporter ATP-binding protein EcfA2 (280 aa).

An ABC transporter domain is found at 3–245 (INLQNVSYTY…VSLLEKKQLG (243 aa)). 40–47 (GHTGSGKS) is an ATP binding site.

The protein belongs to the ABC transporter superfamily. Energy-coupling factor EcfA family. In terms of assembly, forms a stable energy-coupling factor (ECF) transporter complex composed of 2 membrane-embedded substrate-binding proteins (S component), 2 ATP-binding proteins (A component) and 2 transmembrane proteins (T component).

The protein localises to the cell membrane. In terms of biological role, ATP-binding (A) component of a common energy-coupling factor (ECF) ABC-transporter complex. Unlike classic ABC transporters this ECF transporter provides the energy necessary to transport a number of different substrates. This Streptococcus pyogenes serotype M28 (strain MGAS6180) protein is Energy-coupling factor transporter ATP-binding protein EcfA2.